A 221-amino-acid polypeptide reads, in one-letter code: Endo-1,4-beta-xylanase 1 (221 aa).

The N-terminal stretch at 1 to 22 is a signal peptide; that stretch reads MKFFATIAALVVAAVAAPVAEA. A GH11 domain is found at 29–221; the sequence is PMLIERAGPG…GTGSASVTVS (193 aa). The Nucleophile role is filled by Glu-114. Glu-208 functions as the Proton donor in the catalytic mechanism.

It belongs to the glycosyl hydrolase 11 (cellulase G) family.

It is found in the secreted. It catalyses the reaction Endohydrolysis of (1-&gt;4)-beta-D-xylosidic linkages in xylans.. Its pathway is glycan degradation; xylan degradation. Its function is as follows. Endo-1,4-beta-xylanase involved in the hydrolysis of xylan, a major structural heterogeneous polysaccharide found in plant biomass representing the second most abundant polysaccharide in the biosphere, after cellulose. Hydrolyzes xylans from oat spelt and birchwood at similar rates, but it has no detectable activity toward Avicel or carboxymethyl cellulose. This Aureobasidium pullulans (Black yeast) protein is Endo-1,4-beta-xylanase 1 (xynI).